The chain runs to 258 residues: L-aspartate dehydrogenase 1 (258 aa).

NAD(+) contacts are provided by A121 and N181. H211 is a catalytic residue.

It belongs to the L-aspartate dehydrogenase family.

It carries out the reaction L-aspartate + NADP(+) + H2O = oxaloacetate + NH4(+) + NADPH + H(+). The catalysed reaction is L-aspartate + NAD(+) + H2O = oxaloacetate + NH4(+) + NADH + H(+). The protein operates within cofactor biosynthesis; NAD(+) biosynthesis; iminoaspartate from L-aspartate (dehydrogenase route): step 1/1. In terms of biological role, specifically catalyzes the NAD or NADP-dependent dehydrogenation of L-aspartate to iminoaspartate. This Bordetella pertussis (strain Tohama I / ATCC BAA-589 / NCTC 13251) protein is L-aspartate dehydrogenase 1.